The following is a 626-amino-acid chain: E3 ubiquitin-protein ligase HRD1 (626 aa).

An N-terminal signal peptide occupies residues 1–15 (MQLLLSSVCMALTSA). The Lumenal segment spans residues 16 to 38 (VIGFAYYQKQQFYPAVVYITKSN). The chain crosses the membrane as a helical span at residues 39–59 (ASMGVIYIQFFVIVFMFGKLL). At 60 to 96 (SKIFLGTLRAAEFEHLLERFWYALTETCLAFTVFRDD) the chain is on the cytoplasmic side. Residues 97–117 (FNPRFVALFTVLLFLKSFHWL) form a helical membrane-spanning segment. The Lumenal portion of the chain corresponds to 118-128 (AEERVDFMERS). Residues 129-149 (PVLGWLFHIRVGSLLTVLGIL) form a helical membrane-spanning segment. The Cytoplasmic portion of the chain corresponds to 150-167 (DYVLLIHAYNSTLVRGPT). Residues 168–188 (VQLVFGFEYAILLTVIASTAI) traverse the membrane as a helical segment. Residues 189 to 222 (KYVLHAAEMRTDTPWENKAVFLLYTELVIGLIKV) are Lumenal-facing. Residues 223–243 (VLYILFVVIMAKIYALPMFVF) traverse the membrane as a helical segment. Residues 234 to 268 (KIYALPMFVFRPMFFTIRNFRKALNDVIMSRRAIR) form an interaction with p53/TP53 region. At 244 to 626 (RPMFFTIRNF…AATNERTTAE (383 aa)) the chain is on the cytoplasmic side. The RING-type; atypical zinc finger occupies 289-328 (CIICREDMVNHSKKLPCGHIFHTTCLRSWFQRQQTCPTCR). The interval 569–600 (DADEDDIPSTATEAVSIPNSDADFEENSSELG) is disordered. The segment covering 577–587 (STATEAVSIPN) has biased composition (polar residues).

It belongs to the HRD1 family. Homodimer. Interacts with p53. May interact with Septin2.

Its subcellular location is the endoplasmic reticulum membrane. The enzyme catalyses S-ubiquitinyl-[E2 ubiquitin-conjugating enzyme]-L-cysteine + [acceptor protein]-L-lysine = [E2 ubiquitin-conjugating enzyme]-L-cysteine + N(6)-ubiquitinyl-[acceptor protein]-L-lysine.. The protein operates within protein modification; protein ubiquitination. Functionally, acts as an E3 ubiquitin-protein ligase which accepts ubiquitin specifically from endoplasmic reticulum-associated UBC7 E2 ligase and transfers it to substrates, promoting their degradation. Component of the endoplasmic reticulum quality control (ERQC) system also called ER-associated degradation (ERAD) involved in ubiquitin-dependent degradation of misfolded endoplasmic reticulum proteins. Also promotes the degradation of normal but naturally short-lived proteins. Protects cells from ER stress-induced apoptosis. Sequesters p53 in the cytoplasm and promotes its degradation, thereby negatively regulating its biological function in transcription, cell cycle regulation and apoptosis. This is E3 ubiquitin-protein ligase HRD1 (sip3) from Drosophila melanogaster (Fruit fly).